Reading from the N-terminus, the 371-residue chain is MTLTAHLSYFLVLLLAGQGLSDSLLTKDAGPRPLELKEVFKLFQIRFNRSYWNPAEYTRRLSIFAHNLAQAQRLQQEDLGTAEFGETPFSDLTEEEFGQLYGQERSPERTPNMTKKVESNTWGESVPRTCDWRKAKNIISSVKNQGSCKCCWAMAAADNIQALWRIKHQQFVDVSVQELLDCERCGNGCNGGFVWDAYLTVLNNSGLASEKDYPFQGDRKPHRCLAKKYKKVAWIQDFTMLSNNEQAIAHYLAVHGPITVTINMKLLQHYQKGVIKATPSSCDPRQVDHSVLLVGFGKEKEGMQTGTVLSHSRKRRHSSPYWILKNSWGAHWGEKGYFRLYRGNNTCGVTKYPFTAQVDSPVKKARTSCPP.

Positions Met-1–Ser-21 are cleaved as a signal peptide. Positions Asp-22 to Ser-125 are excised as a propeptide. Residues Asn-48 and Asn-112 are each glycosylated (N-linked (GlcNAc...) asparagine). Disulfide bonds link Cys-148–Cys-189, Cys-182–Cys-224, and Cys-282–Cys-347. Residue Cys-151 is part of the active site. Asn-203 carries N-linked (GlcNAc...) asparagine glycosylation. Catalysis depends on residues His-289 and Asn-326. Asn-344 is a glycosylation site (N-linked (GlcNAc...) asparagine).

This sequence belongs to the peptidase C1 family.

It is found in the endoplasmic reticulum. In terms of biological role, may have a specific function in the mechanism or regulation of T-cell cytolytic activity. This is Cathepsin W (Ctsw) from Mus musculus (Mouse).